We begin with the raw amino-acid sequence, 207 residues long: uncharacterized protein (207 aa).

Residues Ser-119 and His-160 each act as charge relay system in the active site.

It belongs to the peptidase S51 family.

This is an uncharacterized protein from Pasteurella multocida (strain Pm70).